The sequence spans 92 residues: MGRECEITGKRTMFGNNVPRKGLAKKKGGAGQHIGVKTKRTFKVNLINKKFFIPELGKNVSIKISASTLRSISKVGLNVFLKKNNKKIDDFI.

Belongs to the bacterial ribosomal protein bL28 family.

This Borrelia duttonii (strain Ly) protein is Large ribosomal subunit protein bL28.